An 88-amino-acid chain; its full sequence is Small ribosomal subunit protein uS17 (88 aa).

It belongs to the universal ribosomal protein uS17 family. In terms of assembly, part of the 30S ribosomal subunit.

In terms of biological role, one of the primary rRNA binding proteins, it binds specifically to the 5'-end of 16S ribosomal RNA. In Brevibacillus brevis (strain 47 / JCM 6285 / NBRC 100599), this protein is Small ribosomal subunit protein uS17.